Reading from the N-terminus, the 390-residue chain is MAEDGSPKIYSRPPRDSSKTPTEADIFFGADNTIPKSETTITSEGDHITSVNDCTADGDFSTTVNKLTPTKEKLKLEEDIEASLKSTTLPEKEITTPTETTNSKPKESITENFIPVKIGNISSPVGTVSLIDFSSNMAKEDILLATIDAEDKEVKPTTELSETQEDSSANDEDTSVPPDENTETDVSSSTSSDVPDDGAVQVTDSFSPESDVPPSTEKEVTTIPDNVAEDKVTKIDLIVSEDRPKTVTKLSDSEEEKFITVFELTNSAEKAKDNPEDPLTDEEPADGVNTWVEKDAANEAESHAVLLTAVESRYDFVVTASETNSVVVEEPHVDTKNSPEKDAAESVTNVTEEFPSVTSVVEQSGNKEDLSTNDSGIFKLLKEEPDELMM.

Disordered regions lie at residues 1–23 (MAEDGSPKIYSRPPRDSSKTPTE), 82–109 (ASLKSTTLPEKEITTPTETTNSKPKESI), and 146–225 (TIDA…TIPD). The segment covering 162-174 (ETQEDSSANDEDT) has biased composition (acidic residues). Residues 184–193 (TDVSSSTSSD) are compositionally biased toward low complexity. Phosphoserine occurs at positions 251 and 267. Threonine 280 carries the phosphothreonine; by CK2 modification. The residue at position 312 (serine 312) is a Phosphoserine. A compositionally biased stretch (basic and acidic residues) spans 330–344 (EPHVDTKNSPEKDAA). The disordered stretch occupies residues 330–390 (EPHVDTKNSP…LKEEPDELMM (61 aa)). Residues serine 346, serine 356, serine 371, and serine 375 each carry the phosphoserine modification. Positions 346–364 (SVTNVTEEFPSVTSVVEQS) are enriched in polar residues.

As to expression, expressed in seminiferous tubules of the testis in step 10 spermatids (stage X), subsequently increasing to reach maximal levels of step 18 elongated spermatids (stage VI) (at protein level). Strongly expressed in testis. Weakly expressed in olfactory epithelium. Expressed in spermatids of seminiferous tubules at steps 4-14 (stages IV to XIV of the seminiferous epithelium classification).

Its subcellular location is the cytoplasm. It localises to the mitochondrion inner membrane. The protein resides in the cell projection. The protein localises to the cilium. It is found in the flagellum. Its subcellular location is the cytoplasmic vesicle. It localises to the secretory vesicle. The protein resides in the acrosome. Calcium-binding protein. Essential for maintaining the structural integrity of the sperm flagella. This is Calcium-binding and spermatid-specific protein 1 (Cabs1) from Rattus norvegicus (Rat).